Here is a 495-residue protein sequence, read N- to C-terminus: Thioredoxin reductase SEP1 (495 aa).

37 to 54 (DFVKPSPPGTTWGLGGTC) is a binding site for FAD. C54 and C59 are oxidised to a cystine. The active-site Proton acceptor is the H468. The segment at residues 493–494 (CU) is a cross-link (cysteinyl-selenocysteine (Cys-Sec)). U494 is a non-standard amino acid (selenocysteine).

It belongs to the class-I pyridine nucleotide-disulfide oxidoreductase family. As to quaternary structure, homodimer. FAD serves as cofactor. The N-terminus is blocked.

The catalysed reaction is [thioredoxin]-dithiol + NADP(+) = [thioredoxin]-disulfide + NADPH + H(+). Activity was very low in selenium-depleted cells, but increased 4-fold to the same level as in selenium-sufficient cells for 70 hours after the addition of 10 nm selenite. The protein is Thioredoxin reductase SEP1 (SEP1) of Emiliania huxleyi (Coccolithophore).